Here is a 359-residue protein sequence, read N- to C-terminus: Probable dual-specificity RNA methyltransferase RlmN (359 aa).

Catalysis depends on Glu-91, which acts as the Proton acceptor. The Radical SAM core domain maps to Gln-97–Asp-335. Cys-104 and Cys-340 are disulfide-bonded. [4Fe-4S] cluster-binding residues include Cys-111, Cys-115, and Cys-118. Residues Gly-163 to Glu-164, Ser-195, Ser-218 to His-220, and Asn-296 each bind S-adenosyl-L-methionine. Residue Cys-340 is the S-methylcysteine intermediate of the active site.

It belongs to the radical SAM superfamily. RlmN family. The cofactor is [4Fe-4S] cluster.

The protein localises to the cytoplasm. It carries out the reaction adenosine(2503) in 23S rRNA + 2 reduced [2Fe-2S]-[ferredoxin] + 2 S-adenosyl-L-methionine = 2-methyladenosine(2503) in 23S rRNA + 5'-deoxyadenosine + L-methionine + 2 oxidized [2Fe-2S]-[ferredoxin] + S-adenosyl-L-homocysteine. The catalysed reaction is adenosine(37) in tRNA + 2 reduced [2Fe-2S]-[ferredoxin] + 2 S-adenosyl-L-methionine = 2-methyladenosine(37) in tRNA + 5'-deoxyadenosine + L-methionine + 2 oxidized [2Fe-2S]-[ferredoxin] + S-adenosyl-L-homocysteine. Its function is as follows. Specifically methylates position 2 of adenine 2503 in 23S rRNA and position 2 of adenine 37 in tRNAs. The polypeptide is Probable dual-specificity RNA methyltransferase RlmN (Streptococcus pyogenes serotype M12 (strain MGAS2096)).